A 544-amino-acid chain; its full sequence is Chaperonin GroEL (544 aa).

ATP is bound by residues 30–33 (TLGP), lysine 51, 87–91 (DGTTT), glycine 415, 479–481 (NAA), and aspartate 495.

The protein belongs to the chaperonin (HSP60) family. Forms a cylinder of 14 subunits composed of two heptameric rings stacked back-to-back. Interacts with the co-chaperonin GroES.

The protein localises to the cytoplasm. It catalyses the reaction ATP + H2O + a folded polypeptide = ADP + phosphate + an unfolded polypeptide.. Together with its co-chaperonin GroES, plays an essential role in assisting protein folding. The GroEL-GroES system forms a nano-cage that allows encapsulation of the non-native substrate proteins and provides a physical environment optimized to promote and accelerate protein folding. This chain is Chaperonin GroEL, found in Acinetobacter baylyi (strain ATCC 33305 / BD413 / ADP1).